We begin with the raw amino-acid sequence, 182 residues long: Transcription termination/antitermination protein NusG (182 aa).

Belongs to the NusG family.

In terms of biological role, participates in transcription elongation, termination and antitermination. The chain is Transcription termination/antitermination protein NusG from Chlamydia muridarum (strain MoPn / Nigg).